Reading from the N-terminus, the 1700-residue chain is Balbiani ring protein 3 (1700 aa).

The signal sequence occupies residues 1-20; the sequence is MKTLSSLLLVLAVNVLLIQA.

In terms of tissue distribution, salivary gland.

It localises to the secreted. Its function is as follows. Used by the larvae to construct a supramolecular structure, the larval tube. Balbiani ring protein 3 could play a role as a transport protein that binds to other proteins intracellularly and in the gland lumen in order to prevent these from forming water-insoluble fibers too early. The polypeptide is Balbiani ring protein 3 (BR3) (Chironomus tentans (Midge)).